The primary structure comprises 561 residues: uncharacterized protein (561 aa).

Polar residues predominate over residues 1–11 (MSQVSLPSQLK). Disordered regions lie at residues 1–22 (MSQVSLPSQLKETGPRLQSRCR) and 522–561 (CSLPQSSPDPVPDGSPRPKQQPQQAQAEQAQQPQQQIMLP). A compositionally biased stretch (low complexity) spans 541-561 (QQPQQAQAEQAQQPQQQIMLP).

To Synechocystis PCC 6803 sll0335 and to M.tuberculosis Rv2567.

This is an uncharacterized protein from Mycobacterium leprae (strain TN).